Reading from the N-terminus, the 593-residue chain is MNELIKHKLELLPDSPGCYLHKDKNGTIIYVGKAKNLKNRVKSYFHGSHNTKTELLVSEIEDFEYIVTTSNTEALLLEINLIQENMPKYNIRLKDDKSYPYIKITNERYPRLMITRQVKKSDGTYFGPYPDSGAATEIKRLLDRLFPFKKCTNPANKVCFYYHLGQCNAHTVCQTNKAYWDSLREDVKQFLNGKDNKIVNGLTEKMKSAAMTMEFERAAEYRDLIEAISLLRTKQRVIHQDMKDRDVFGYFVDKGWMCVQVFFVRNGKLIQRDVNMFPYYNEPEEDFLTYIGQFYQDTKHFLPKEVFIPQDIDAKSVETIVGCKIVKPQRGEKKQLVNLAIKNARVSLQQKFDLLEKDIRKTHGAIENLGNLLNIPKPVRIEAFDNSNIQGTSPVAAMVVFVNGKPSKKDYRKFKIKTVIGPDDYASMREVIHRRYSRVLKDGLTPPDLIVIDGGQGQVNIARDVIENQFGLAIPIAGLQKNDKHQTHELLFGDPLEVVELPRNSEEFFLLHRIQDEVHRFAITFHRQLRSKNSFSSKLDGITGLGPKRKQLLMKHFKSLPNIQKAEIEDIIMCGIPRTVAESLRDSLNDPPK.

The region spanning 14 to 91 is the GIY-YIG domain; that stretch reads DSPGCYLHKD…IQENMPKYNI (78 aa). One can recognise a UVR domain in the interval 196-231; sequence NKIVNGLTEKMKSAAMTMEFERAAEYRDLIEAISLL.

It belongs to the UvrC family. In terms of assembly, interacts with UvrB in an incision complex.

It is found in the cytoplasm. The UvrABC repair system catalyzes the recognition and processing of DNA lesions. UvrC both incises the 5' and 3' sides of the lesion. The N-terminal half is responsible for the 3' incision and the C-terminal half is responsible for the 5' incision. The chain is UvrABC system protein C from Streptococcus agalactiae serotype V (strain ATCC BAA-611 / 2603 V/R).